Consider the following 1272-residue polypeptide: MEPPGGSLGPGRGTRDKKKGRSPDELPSAGGDGGKSKKFTLKRLMADELERFTSMRIKKEKEKPNSAHRNSSASYGDDPTAQSLQDVSDEQVLVLFEQMLLDMNLNEEKQQPLREKDIIIKREMVSQYLYTSKAGMSQKESSKSAMMYIQELRSGLRDMPLLSCLESLRVSLNNNPVSWVQTFGAEGLASLLDILKRLHDEKEETAGSYDSRNKHEIIRCLKAFMNNKFGIKTMLETEEGILLLVRAMDPAVPNMMIDAAKLLSALCILPQPEDMNERVLEAMTERAEMDEVERFQPLLDGLKSGTTIALKVGCLQLINALITPAEELDFRVHIRSELMRLGLHQVLQDLREIENEDMRVQLNVFDEQGEEDSYDLKGRLDDIRMEMDDFNEVFQILLNTVKDSKAEPHFLSILQHLLLVRNDYEARPQYYKLIEECISQIVLHKNGADPDFKCRHLQIEIEGLIDQMIDKTKVEKSEAKAAELEKKLDSELTARHELQVEMKKMESDFEQKLQDLQGEKDALHSEKQQIATEKQDLEAEVSQLTGEVAKLTKELEDAKKEMASLSAAAITVPPSVPSRAPVPPAPPLPGDSGTIIPPPPAPGDSTTPPPPPPPPPPPPPLPGGVCISSPPSLPGGTAISPPPPLSGDATIPPPPPLPEGVGIPSPSSLPGGTAIPPPPPLPGSARIPPPPPPLPGSAGIPPPPPPLPGEAGMPPPPPPLPGGPGIPPPPPFPGGPGIPPPPPGMGMPPPPPFGFGVPAAPVLPFGLTPKKLYKPEVQLRRPNWSKLVAEDLSQDCFWTKVKEDRFENNELFAKLTLTFSAQTKTSKAKKDQEGGEEKKSVQKKKVKELKVLDSKTAQNLSIFLGSFRMPYQEIKNVILEVNEAVLTESMIQNLIKQMPEPEQLKMLSELKDEYDDLAESEQFGVVMGTVPRLRPRLNAILFKLQFSEQVENIKPEIVSVTAACEELRKSESFSNLLEITLLVGNYMNAGSRNAGAFGFNISFLCKLRDTKSTDQKMTLLHFLAELCENDYPDVLKFPDELAHVEKASRVSAENLQKNLDQMKKQISDVERDVQNFPAATDEKDKFVEKMTSFVKDAQEQYNKLRMMHSNMETLYKELGEYFLFDPKKLSVEEFFMDLHNFRNMFLQAVKENQKRRETEEKMRRAKLAKEKAEKERLEKQQKREQLIDMNAEGDETGVMDSLLEALQSGAAFRRKRGPRQANRKAGCAVTSLLASELTKDDAMAAVPAKVSKNSETFPTILEEAKELVGRAS.

N-acetylmethionine is present on Met1. Over residues 1–12 (MEPPGGSLGPGR) the composition is skewed to gly residues. The tract at residues 1-84 (MEPPGGSLGP…YGDDPTAQSL (84 aa)) is disordered. 3 positions are modified to phosphoserine: Ser7, Ser22, and Ser36. The span at 44–65 (LMADELERFTSMRIKKEKEKPN) shows a compositional bias: basic and acidic residues. The span at 67 to 84 (AHRNSSASYGDDPTAQSL) shows a compositional bias: polar residues. The region spanning 84–449 (LQDVSDEQVL…QIVLHKNGAD (366 aa)) is the GBD/FH3 domain. Positions 468 to 572 (MIDKTKVEKS…ASLSAAAITV (105 aa)) form a coiled coil. The segment at 573–755 (PPSVPSRAPV…GMPPPPPFGF (183 aa)) is disordered. 3 stretches are compositionally biased toward pro residues: residues 574 to 589 (PSVPSRAPVPPAPPLP), 596 to 622 (IPPPPAPGDSTTPPPPPPPPPPPPPLP), and 640 to 658 (SPPPPLSGDATIPPPPPLP). The 182-residue stretch at 583–764 (PPAPPLPGDS…FGVPAAPVLP (182 aa)) folds into the FH1 domain. Residues 659-674 (EGVGIPSPSSLPGGTA) show a composition bias toward low complexity. Pro residues predominate over residues 675-753 (IPPPPPLPGS…GMGMPPPPPF (79 aa)). Phosphothreonine is present on Thr768. Positions 769-1171 (PKKLYKPEVQ…MRRAKLAKEK (403 aa)) constitute an FH2 domain. Positions 1039–1196 (DELAHVEKAS…IDMNAEGDET (158 aa)) form a coiled coil. 2 positions are modified to N6-acetyllysine: Lys1057 and Lys1103. Phosphotyrosine is present on Tyr1121. The DAD domain occupies 1194-1222 (DETGVMDSLLEALQSGAAFRRKRGPRQAN). Ser1251 and Ser1254 each carry phosphoserine.

The protein belongs to the formin homology family. Diaphanous subfamily. As to quaternary structure, homodimer. Interacts with the GTP-bound form of RHOA. Interacts with RHOC, PFY1, MAPRE1 and BAIAP2. Interacts with APC; acts as a scaffold protein for MAPRE1 and APC to stabilize microtubules and promote cell migration. Interacts with SCAI. Interacts with DCAF7, via FH2 domain. Interacts with NCDN. Interacts with OSBPL10, OSBPL2, VIM, TUBB and DYN1. Post-translationally, phosphorylation at Thr-768 is stimulated by cAMP and regulates stability, complex formation and mitochondrial movement. Expressed in brain, heart, placenta, lung, kidney, pancreas, liver, skeletal muscle and cochlea. Expressed in platelets.

The protein resides in the cell membrane. It is found in the cell projection. It localises to the ruffle membrane. The protein localises to the cytoplasm. Its subcellular location is the cytoskeleton. The protein resides in the microtubule organizing center. It is found in the centrosome. It localises to the spindle. The protein localises to the nucleus. Functionally, actin nucleation and elongation factor required for the assembly of F-actin structures, such as actin cables and stress fibers. Binds to the barbed end of the actin filament and slows down actin polymerization and depolymerization. Required for cytokinesis, and transcriptional activation of the serum response factor. DFR proteins couple Rho and Src tyrosine kinase during signaling and the regulation of actin dynamics. Functions as a scaffold protein for MAPRE1 and APC to stabilize microtubules and promote cell migration. Has neurite outgrowth promoting activity. Acts in a Rho-dependent manner to recruit PFY1 to the membrane. In hear cells, it may play a role in the regulation of actin polymerization in hair cells. The MEMO1-RHOA-DIAPH1 signaling pathway plays an important role in ERBB2-dependent stabilization of microtubules at the cell cortex. It controls the localization of APC and CLASP2 to the cell membrane, via the regulation of GSK3B activity. In turn, membrane-bound APC allows the localization of the MACF1 to the cell membrane, which is required for microtubule capture and stabilization. Plays a role in the regulation of cell morphology and cytoskeletal organization. Required in the control of cell shape. Plays a role in brain development. Also acts as an actin nucleation and elongation factor in the nucleus by promoting nuclear actin polymerization inside the nucleus to drive serum-dependent SRF-MRTFA activity. The polypeptide is Protein diaphanous homolog 1 (DIAPH1) (Homo sapiens (Human)).